A 319-amino-acid chain; its full sequence is Olfactory receptor 13F1 (319 aa).

Residues 1-25 lie on the Extracellular side of the membrane; that stretch reads MFPANWTSVKVFFFLGFFHYPKVQV. Asparagine 5 is a glycosylation site (N-linked (GlcNAc...) asparagine). A helical transmembrane segment spans residues 26–46; sequence IIFAVCLLMYLITLLGNIFLI. Topologically, residues 47 to 54 are cytoplasmic; that stretch reads SITILDSH. A helical membrane pass occupies residues 55–75; it reads LHTPMYLFLSNLSFLDIWYSS. The Extracellular segment spans residues 76-99; the sequence is SALSPMLANFVSGRNTISFSGCAT. Cysteine 97 and cysteine 189 are disulfide-bonded. Residues 100 to 120 form a helical membrane-spanning segment; that stretch reads QMYLSLAMGSTECVLLPMMAY. The Cytoplasmic segment spans residues 121–139; sequence DRYVAICNPLRYPVIMNRR. Residues 140–160 form a helical membrane-spanning segment; the sequence is TCVQIAAGSWMTGCLTAMVEM. Over 161–197 the chain is Extracellular; it reads MSVLPLSLCGNSIINHFTCEILAILKLVCVDTSLVQL. The chain crosses the membrane as a helical span at residues 198–217; it reads IMLVISVLLLPMPMLLICIS. Residues 218–237 are Cytoplasmic-facing; it reads YAFILASILRISSVEGRSKA. A helical transmembrane segment spans residues 238–258; sequence FSTCTAHLMVVVLFYGTALSM. Residues 259–271 lie on the Extracellular side of the membrane; the sequence is HLKPSAVDSQEID. The chain crosses the membrane as a helical span at residues 272–292; that stretch reads KFMALVYAGQTPMLNPIIYSL. Topologically, residues 293-319 are cytoplasmic; sequence RNKEVKVALKKLLIRNHFNTAFISILK.

This sequence belongs to the G-protein coupled receptor 1 family.

It localises to the cell membrane. Its function is as follows. Odorant receptor. The protein is Olfactory receptor 13F1 (OR13F1) of Homo sapiens (Human).